We begin with the raw amino-acid sequence, 288 residues long: MDELALLKRSDGPVTRTRLARDLTALGLGDGDTVMFHTRMSAVGYVAGGPETVIGALRDVVGERGTLMVTCGWNDAPPYDFTDWPQTWQDARRAEHPAYDPVLSEADHNNGRLPEALRRRPGAVRSRHPDASFAALGAAATALTADHPWDDPHGPDSPLARLVAMGGRVLLLGAPLEALTLLHHAEALADAPGKRFVDYEQPILVDGERVWRRFHDIDSEDGAFDYSALVPEGTEAFEIIGRDMRAAGIGRRGTVGAADSHLFEARDVVDFGVAWMEEKLGRERGPGG.

This sequence belongs to the antibiotic N-acetyltransferase family.

It catalyses the reaction a 2-deoxystreptamine antibiotic + acetyl-CoA = an N(3)-acetyl-2-deoxystreptamine antibiotic + CoA + H(+). Functionally, resistance to paromomycin. The polypeptide is Aminoglycoside N(3)-acetyltransferase VII (aacC7) (Streptomyces paromomycinus (Streptomyces rimosus subsp. paromomycinus)).